The sequence spans 131 residues: Small ribosomal subunit protein uS8 (131 aa).

This sequence belongs to the universal ribosomal protein uS8 family. As to quaternary structure, part of the 30S ribosomal subunit. Contacts proteins S5 and S12.

One of the primary rRNA binding proteins, it binds directly to 16S rRNA central domain where it helps coordinate assembly of the platform of the 30S subunit. This chain is Small ribosomal subunit protein uS8, found in Helicobacter pylori (strain P12).